The primary structure comprises 357 residues: Histidinol-phosphate aminotransferase (357 aa).

Lys222 carries the N6-(pyridoxal phosphate)lysine modification.

The protein belongs to the class-II pyridoxal-phosphate-dependent aminotransferase family. Histidinol-phosphate aminotransferase subfamily. As to quaternary structure, homodimer. Pyridoxal 5'-phosphate serves as cofactor.

The catalysed reaction is L-histidinol phosphate + 2-oxoglutarate = 3-(imidazol-4-yl)-2-oxopropyl phosphate + L-glutamate. Its pathway is amino-acid biosynthesis; L-histidine biosynthesis; L-histidine from 5-phospho-alpha-D-ribose 1-diphosphate: step 7/9. This is Histidinol-phosphate aminotransferase from Leuconostoc mesenteroides subsp. mesenteroides (strain ATCC 8293 / DSM 20343 / BCRC 11652 / CCM 1803 / JCM 6124 / NCDO 523 / NBRC 100496 / NCIMB 8023 / NCTC 12954 / NRRL B-1118 / 37Y).